Reading from the N-terminus, the 304-residue chain is Acetylglutamate kinase (304 aa).

Substrate contacts are provided by residues 69–70, arginine 91, and asparagine 202; that span reads GG.

The protein belongs to the acetylglutamate kinase family. ArgB subfamily.

The protein localises to the cytoplasm. The enzyme catalyses N-acetyl-L-glutamate + ATP = N-acetyl-L-glutamyl 5-phosphate + ADP. It participates in amino-acid biosynthesis; L-arginine biosynthesis; N(2)-acetyl-L-ornithine from L-glutamate: step 2/4. Its function is as follows. Catalyzes the ATP-dependent phosphorylation of N-acetyl-L-glutamate. This Caulobacter vibrioides (strain ATCC 19089 / CIP 103742 / CB 15) (Caulobacter crescentus) protein is Acetylglutamate kinase.